A 92-amino-acid chain; its full sequence is Small ribosomal subunit protein uS19c (92 aa).

This sequence belongs to the universal ribosomal protein uS19 family.

The protein resides in the plastid. The protein localises to the chloroplast. Its function is as follows. Protein S19 forms a complex with S13 that binds strongly to the 16S ribosomal RNA. The sequence is that of Small ribosomal subunit protein uS19c (rps19) from Marchantia polymorpha (Common liverwort).